A 740-amino-acid polypeptide reads, in one-letter code: Vertnin (740 aa).

3 disordered regions span residues 485 to 506 (EAGE…RGLI), 560 to 616 (PGMQ…DQNV), and 653 to 673 (TQSQ…APGG). Residues 578–604 (QKPEGRQKPEEQQKPEGRQKPEGRQKP) are compositionally biased toward basic and acidic residues. The span at 653–667 (TQSQPHSGSLPSQTL) shows a compositional bias: polar residues.

It belongs to the vertnin family.

Its subcellular location is the nucleus. In terms of biological role, acts as a transcription factor that regulates development of thoracic vertebrae. The polypeptide is Vertnin (Vrtn) (Mus musculus (Mouse)).